Reading from the N-terminus, the 301-residue chain is Cutinase (301 aa).

Positions 1 to 40 (MAVMTPRRERSSLLSRALQVTAAAATALVTAVSLAAPAHA) are cleaved as a signal peptide. Tyr-100 provides a ligand contact to poly(ethylene terephthalate). The active-site Nucleophile is the Ser-170. Residues Met-171 and Trp-195 each coordinate poly(ethylene terephthalate). Active-site charge relay system residues include Asp-216 and His-248. Residues Cys-281 and Cys-299 are joined by a disulfide bond.

This sequence belongs to the AB hydrolase superfamily.

The protein localises to the secreted. It localises to the periplasm. The catalysed reaction is a butanoate ester + H2O = an aliphatic alcohol + butanoate + H(+). It carries out the reaction (ethylene terephthalate)(n) + H2O = (ethylene terephthalate)(n-1) + 4-[(2-hydroxyethoxy)carbonyl]benzoate + H(+). It catalyses the reaction cutin + H2O = cutin monomers.. With respect to regulation, activated by magnesium ions. Activated by calcium ions. Inhibited by the serine hydrolase inhibitor phenylmethanesulfonyl fluoride (PMSF). Its function is as follows. Catalyzes the hydrolysis of cutin, a polyester that forms the structure of plant cuticle. Shows esterase activity towards p-nitrophenol-linked aliphatic esters (pNP-aliphatic esters). Also hydrolyzes the triglyceride triolein. Capable of degrading the plastic poly(ethylene terephthalate) (PET), the most abundant polyester plastic in the world. The chain is Cutinase from Thermobifida fusca (strain YX).